Consider the following 976-residue polypeptide: Ephrin type-A receptor 2 (976 aa).

The first 23 residues, 1–23 (MELWAARACFVLLWGCALAPATA), serve as a signal peptide directing secretion. A mediates interaction with CLDN4 region spans residues 1 to 206 (MELWAARACF…YYKKCPELLQ (206 aa)). Residues 25-537 (QGKEVVLLDF…SPEGSGSLAV (513 aa)) are Extracellular-facing. In terms of domain architecture, Eph LBD spans 28–206 (EVVLLDFAAA…YYKKCPELLQ (179 aa)). 2 disulfides stabilise this stretch: Cys-70/Cys-188 and Cys-105/Cys-115. The Fibronectin type-III 1 domain maps to 328-432 (PPSAPHYLTA…TSRSFRTASV (105 aa)). N-linked (GlcNAc...) asparagine glycosylation is found at Asn-407 and Asn-435. The Fibronectin type-III 2 domain occupies 438–529 (EPPKVRLEGR…KVHEFQTLSP (92 aa)). A helical membrane pass occupies residues 538-558 (IGGVAVCVVLLLLLAGAGFFI). Residues 559-976 (HRRRKNLRAR…DQVNTVGIPI (418 aa)) lie on the Cytoplasmic side of the membrane. Ser-570 carries the phosphoserine modification. Tyr-575 bears the Phosphotyrosine mark. Ser-579 is subject to Phosphoserine. Tyr-588 carries the phosphotyrosine; by autocatalysis modification. Tyr-594 carries the phosphotyrosine modification. A mediates interaction with ARHGEF16 region spans residues 606-906 (TEIHPSCVTR…STSGSEGVPF (301 aa)). Positions 613 to 875 (VTRQKVIGAG…DIVSILDKLI (263 aa)) constitute a Protein kinase domain. Residue 619–627 (IGAGEFGEV) coordinates ATP. Tyr-628 bears the Phosphotyrosine mark. Position 646 (Lys-646) interacts with ATP. Phosphothreonine is present on Thr-647. Phosphotyrosine; by autocatalysis is present on Tyr-735. Asp-739 acts as the Proton acceptor in catalysis. Tyr-772 is modified (phosphotyrosine). Residues Ser-869, Ser-892, Ser-897, and Ser-901 each carry the phosphoserine modification. Residues 886–976 (DFDPRVSIRL…DQVNTVGIPI (91 aa)) are negatively regulates interaction with ARHGEF16. The region spanning 904–968 (VPFRTVSEWL…AYSLLGLKDQ (65 aa)) is the SAM domain. The residue at position 921 (Tyr-921) is a Phosphotyrosine; by autocatalysis. Tyr-930 bears the Phosphotyrosine mark. A PDZ-binding motif is present at residues 974-976 (IPI).

Belongs to the protein kinase superfamily. Tyr protein kinase family. Ephrin receptor subfamily. Homodimer. Interacts with SLA. Interacts (phosphorylated form) with VAV2, VAV3 and PI3-kinase p85 subunit (PIK3R1, PIK3R2 or PIK3R3); critical for the EFNA1-induced activation of RAC1 which stimulates cell migration. Interacts with INPPL1; regulates activated EPHA2 endocytosis and degradation. Interacts (inactivated form) with PTK2/FAK1 and interacts (EFNA1 ligand-activated form) with PTPN11; regulates integrin-mediated adhesion. Interacts with ARHGEF16, DOCK4 and ELMO2; mediates ligand-independent activation of RAC1 which stimulates cell migration. Interacts with CLDN4; phosphorylates CLDN4 and may regulate tight junctions. Interacts with ACP1. Interacts with ANKS1A. Interacts with CEMIP. Interacts with NCK1; may regulate EPHA2 activity in cell migration and adhesion. Interacts with TIMD4. Post-translationally, autophosphorylates. Phosphorylated on tyrosine upon binding and activation by EFNA1. Phosphorylated residues Tyr-588 and Tyr-594 are required for binding VAV2 and VAV3 while phosphorylated residues Tyr-735 and Tyr-930 are required for binding PI3-kinase p85 subunit (PIK3R1, PIK3R2 or PIK3R3). These phosphorylated residues are critical for recruitment of VAV2 and VAV3 and PI3-kinase p85 subunit which transduce downstream signaling to activate RAC1 GTPase and cell migration. Dephosphorylation of Tyr-930 by PTPRF prevents the interaction of EPHA2 with NCK1. Phosphorylated at Ser-897 by PKB; serum-induced phosphorylation which targets EPHA2 to the cell leading edge and stimulates cell migration. Phosphorylation by PKB is inhibited by EFNA1-activated EPHA2 which regulates PKB activity via a reciprocal regulatory loop. Phosphorylated at Ser-897 in response to TNF by RPS6KA1 and RPS6KA3; RPS6KA-EPHA2 signaling pathway controls cell migration. Phosphorylated at Ser-897 by PKA; blocks cell retraction induced by EPHA2 kinase activity. Dephosphorylated by ACP1. Ubiquitinated by CHIP/STUB1. Ubiquitination is regulated by the HSP90 chaperone and regulates the receptor stability and activity through proteasomal degradation. ANKS1A prevents ubiquitination and degradation.

The protein localises to the cell membrane. Its subcellular location is the cell projection. It localises to the ruffle membrane. It is found in the lamellipodium membrane. The protein resides in the cell junction. The protein localises to the focal adhesion. The catalysed reaction is L-tyrosyl-[protein] + ATP = O-phospho-L-tyrosyl-[protein] + ADP + H(+). In terms of biological role, receptor tyrosine kinase which binds promiscuously membrane-bound ephrin-A family ligands residing on adjacent cells, leading to contact-dependent bidirectional signaling into neighboring cells. The signaling pathway downstream of the receptor is referred to as forward signaling while the signaling pathway downstream of the ephrin ligand is referred to as reverse signaling. Activated by the ligand ephrin-A1/EFNA1 regulates migration, integrin-mediated adhesion, proliferation and differentiation of cells. Regulates cell adhesion and differentiation through DSG1/desmoglein-1 and inhibition of the ERK1/ERK2 signaling pathway. May also participate in UV radiation-induced apoptosis and have a ligand-independent stimulatory effect on chemotactic cell migration. During development, may function in distinctive aspects of pattern formation and subsequently in development of several fetal tissues. Involved for instance in angiogenesis, in early hindbrain development and epithelial proliferation and branching morphogenesis during mammary gland development. Engaged by the ligand ephrin-A5/EFNA5 may regulate lens fiber cells shape and interactions and be important for lens transparency development and maintenance. With ephrin-A2/EFNA2 may play a role in bone remodeling through regulation of osteoclastogenesis and osteoblastogenesis. The chain is Ephrin type-A receptor 2 (EPHA2) from Macaca fascicularis (Crab-eating macaque).